Consider the following 439-residue polypeptide: 3-phosphoshikimate 1-carboxyvinyltransferase (439 aa).

Residues Lys29 and Arg34 each coordinate 3-phosphoshikimate. Residue Lys29 coordinates phosphoenolpyruvate. The phosphoenolpyruvate site is built by Gly99 and Arg128. 6 residues coordinate 3-phosphoshikimate: Ser171, Ser172, Gln173, Ser199, Asp316, and Lys343. A phosphoenolpyruvate-binding site is contributed by Gln173. The active-site Proton acceptor is the Asp316. Phosphoenolpyruvate is bound by residues Arg347, Arg390, and Lys416.

Belongs to the EPSP synthase family. As to quaternary structure, monomer.

The protein localises to the cytoplasm. The catalysed reaction is 3-phosphoshikimate + phosphoenolpyruvate = 5-O-(1-carboxyvinyl)-3-phosphoshikimate + phosphate. Its pathway is metabolic intermediate biosynthesis; chorismate biosynthesis; chorismate from D-erythrose 4-phosphate and phosphoenolpyruvate: step 6/7. Its function is as follows. Catalyzes the transfer of the enolpyruvyl moiety of phosphoenolpyruvate (PEP) to the 5-hydroxyl of shikimate-3-phosphate (S3P) to produce enolpyruvyl shikimate-3-phosphate and inorganic phosphate. The chain is 3-phosphoshikimate 1-carboxyvinyltransferase from Deinococcus radiodurans (strain ATCC 13939 / DSM 20539 / JCM 16871 / CCUG 27074 / LMG 4051 / NBRC 15346 / NCIMB 9279 / VKM B-1422 / R1).